The chain runs to 389 residues: Galactokinase (389 aa).

Residue 34-37 (EHTD) coordinates substrate. Residues S68 and 125-131 (GSGLSSS) each bind ATP. Mg(2+) is bound by residues S131 and E163. D175 functions as the Proton acceptor in the catalytic mechanism. A substrate-binding site is contributed by Y225.

This sequence belongs to the GHMP kinase family. GalK subfamily.

The protein localises to the cytoplasm. It carries out the reaction alpha-D-galactose + ATP = alpha-D-galactose 1-phosphate + ADP + H(+). It functions in the pathway carbohydrate metabolism; galactose metabolism. In terms of biological role, catalyzes the transfer of the gamma-phosphate of ATP to D-galactose to form alpha-D-galactose-1-phosphate (Gal-1-P). The polypeptide is Galactokinase (Clostridium acetobutylicum (strain ATCC 824 / DSM 792 / JCM 1419 / IAM 19013 / LMG 5710 / NBRC 13948 / NRRL B-527 / VKM B-1787 / 2291 / W)).